The primary structure comprises 258 residues: Isoprenyl transferase 2 (258 aa).

Asp-39 is a catalytic residue. Asp-39 contacts Mg(2+). Residues 40 to 43, Trp-44, Arg-52, His-57, and 85 to 87 contribute to the substrate site; these read GNRR and SND. Asn-88 functions as the Proton acceptor in the catalytic mechanism. Substrate-binding positions include Arg-92, Arg-207, and 213–215; that span reads RLS. Glu-226 is a Mg(2+) binding site.

The protein belongs to the UPP synthase family. As to quaternary structure, homodimer. The cofactor is Mg(2+).

Functionally, catalyzes the condensation of isopentenyl diphosphate (IPP) with allylic pyrophosphates generating different type of terpenoids. This is Isoprenyl transferase 2 from Tropheryma whipplei (strain Twist) (Whipple's bacillus).